A 903-amino-acid polypeptide reads, in one-letter code: Alanine--tRNA ligase (903 aa).

Zn(2+) is bound by residues His-591, His-595, Cys-695, and His-699.

This sequence belongs to the class-II aminoacyl-tRNA synthetase family. Zn(2+) serves as cofactor.

It localises to the cytoplasm. The catalysed reaction is tRNA(Ala) + L-alanine + ATP = L-alanyl-tRNA(Ala) + AMP + diphosphate. Its function is as follows. Catalyzes the attachment of alanine to tRNA(Ala) in a two-step reaction: alanine is first activated by ATP to form Ala-AMP and then transferred to the acceptor end of tRNA(Ala). Also edits incorrectly charged Ser-tRNA(Ala) and Gly-tRNA(Ala) via its editing domain. This is Alanine--tRNA ligase from Methanosphaera stadtmanae (strain ATCC 43021 / DSM 3091 / JCM 11832 / MCB-3).